Consider the following 221-residue polypeptide: N-(5'-phosphoribosyl)anthranilate isomerase (221 aa).

This sequence belongs to the TrpF family.

It catalyses the reaction N-(5-phospho-beta-D-ribosyl)anthranilate = 1-(2-carboxyphenylamino)-1-deoxy-D-ribulose 5-phosphate. Its pathway is amino-acid biosynthesis; L-tryptophan biosynthesis; L-tryptophan from chorismate: step 3/5. This chain is N-(5'-phosphoribosyl)anthranilate isomerase, found in Parabacteroides distasonis (strain ATCC 8503 / DSM 20701 / CIP 104284 / JCM 5825 / NCTC 11152).